The sequence spans 316 residues: Transcription initiation factor IIB (316 aa).

The TFIIB-type zinc finger occupies 11–42; it reads PRVTCPNHPDAILVEDYRAGDMICPECGLVVG. C15, H18, C34, and C37 together coordinate Zn(2+). S70, S76, and S92 each carry phosphoserine. Repeat copies occupy residues 124-200 and 218-294. DNA is bound by residues K152, R154, K189, and K196. Positions 189 to 193 are core promoter DNA-binding; it reads KEIGR. The residue at position 238 (K238) is an N6-acetyllysine; by autocatalysis. The segment at 244–316 is necessary for TATA box-bound complex TBP formation; that stretch reads LVPGRSPISV…DTPVDKLPQL (73 aa). DNA is bound at residue R248. The segment at 249-252 is core promoter DNA-binding; it reads SPIS. K272, A281, T284, R286, and R290 together coordinate DNA. The interval 283–286 is core promoter DNA-binding; sequence VTIR.

The protein belongs to the TFIIB family. In terms of assembly, found in a ternary complex with TATA box-bound TBP. Part of a TFIID-containing RNA polymerase II pre-initiation complex (PIC) that is composed of TBP and at least GTF2A1, GTF2A2, GTF2E1, GTF2E2, GTF2F1, GTF2H2, GTF2H3, GTF2H4, GTF2H5, GTF2B, TCEA1, ERCC2, ERCC3, TAF1, TAF2, TAF3, TAF4, TAF5, TAF6, TAF7, TAF8, TAF9, TAF10, TAF11, TAF12 and TAF13. Associates with TFIID-TFIIA (DA complex) to form TFIID-TFIIA-TFIIB (DAB complex), which is then recognized by RNA polymerase II (Pol II). Found in a RNA polymerase II initiation complex. Interacts (via C-terminus) with TBP; this interaction with TATA box-bound TBP guides Pol II into the PIC. Interacts (via N-terminus) with Pol II. Interacts (via C-terminus) with SSU72; this interaction is inhibited by SYMPK. Interacts with NR2F1; this interaction is direct. Interacts with PGR. Interacts with ESR1. Interacts with GTF2F1 (via C-terminus and preferentially via acetylated form); this interaction prevents binding of GTF2B to GTF2F2. Interacts with GTF2F2 (via N-terminus); this interaction is inhibited in presence of GTF2F1. Interacts with the transcription elongation factor TCEA2. Interacts with HSF1 (via transactivation domain). Interacts with GPBP1. In terms of processing, acetylated. Autoacetylated; autoacetylation at Lys-238 stimulates transcription activation.

Its subcellular location is the nucleus. The protein resides in the chromosome. It carries out the reaction L-lysyl-[protein] + acetyl-CoA = N(6)-acetyl-L-lysyl-[protein] + CoA + H(+). In terms of biological role, general transcription factor that plays a role in transcription initiation by RNA polymerase II (Pol II). Involved in the pre-initiation complex (PIC) formation and Pol II recruitment at promoter DNA. Together with the TATA box-bound TBP forms the core initiation complex and provides a bridge between TBP and the Pol II-TFIIF complex. Released from the PIC early following the onset of transcription during the initiation and elongation transition and reassociates with TBP during the next transcription cycle. Associates with chromatin to core promoter-specific regions. Binds to two distinct DNA core promoter consensus sequence elements in a TBP-independent manner; these IIB-recognition elements (BREs) are localized immediately upstream (BREu), 5'-[GC][GC][GA]CGCC-3', and downstream (BREd), 5'-[GA]T[TGA][TG][GT][TG][TG]-3', of the TATA box element. Modulates transcription start site selection. Also exhibits autoacetyltransferase activity that contributes to the activated transcription. In Pongo abelii (Sumatran orangutan), this protein is Transcription initiation factor IIB.